The chain runs to 617 residues: UvrABC system protein C (617 aa).

The 79-residue stretch at 22–100 (KLPGVYRFFD…IKALSPKYNI (79 aa)) folds into the GIY-YIG domain. The UVR domain maps to 209–244 (DELTRTLQHKMQTAAANLQFEEAARYRDQIQALGII).

The protein belongs to the UvrC family. In terms of assembly, interacts with UvrB in an incision complex.

The protein resides in the cytoplasm. Functionally, the UvrABC repair system catalyzes the recognition and processing of DNA lesions. UvrC both incises the 5' and 3' sides of the lesion. The N-terminal half is responsible for the 3' incision and the C-terminal half is responsible for the 5' incision. This chain is UvrABC system protein C, found in Neisseria gonorrhoeae (strain ATCC 700825 / FA 1090).